The following is a 174-amino-acid chain: Co-chaperone protein HscB homolog (174 aa).

Positions 2–74 constitute a J domain; that stretch reads NYFELFKFSP…IRRAEHMLSL (73 aa).

It belongs to the HscB family. Interacts with HscA and stimulates its ATPase activity.

Its function is as follows. Co-chaperone involved in the maturation of iron-sulfur cluster-containing proteins. Seems to help targeting proteins to be folded toward HscA. This is Co-chaperone protein HscB homolog from Shewanella baltica (strain OS185).